We begin with the raw amino-acid sequence, 347 residues long: Dihydroorotate dehydrogenase (quinone) (347 aa).

Residues 61–65 and T85 each bind FMN; that span reads AGLDK. Residue K65 participates in substrate binding. Residue 110–114 coordinates substrate; the sequence is NRMGF. FMN is bound by residues N138 and N171. N171 serves as a coordination point for substrate. The active-site Nucleophile is the S174. Residue N176 coordinates substrate. K216 and T244 together coordinate FMN. Substrate is bound at residue 245–246; that stretch reads NT. Residues G267, G296, and 317 to 318 contribute to the FMN site; that span reads YT.

It belongs to the dihydroorotate dehydrogenase family. Type 2 subfamily. In terms of assembly, monomer. It depends on FMN as a cofactor.

The protein resides in the cell membrane. The enzyme catalyses (S)-dihydroorotate + a quinone = orotate + a quinol. It functions in the pathway pyrimidine metabolism; UMP biosynthesis via de novo pathway; orotate from (S)-dihydroorotate (quinone route): step 1/1. Catalyzes the conversion of dihydroorotate to orotate with quinone as electron acceptor. This chain is Dihydroorotate dehydrogenase (quinone), found in Azotobacter vinelandii (strain DJ / ATCC BAA-1303).